The primary structure comprises 316 residues: Ribosomal protein L11 methyltransferase (316 aa).

Residues T157, G178, D200, and N243 each coordinate S-adenosyl-L-methionine.

Belongs to the methyltransferase superfamily. PrmA family.

Its subcellular location is the cytoplasm. The catalysed reaction is L-lysyl-[protein] + 3 S-adenosyl-L-methionine = N(6),N(6),N(6)-trimethyl-L-lysyl-[protein] + 3 S-adenosyl-L-homocysteine + 3 H(+). Functionally, methylates ribosomal protein L11. This chain is Ribosomal protein L11 methyltransferase, found in Streptococcus pneumoniae (strain 70585).